We begin with the raw amino-acid sequence, 158 residues long: Cyclic pyranopterin monophosphate synthase (158 aa).

Substrate-binding positions include 75-77 (LCH) and 113-114 (ME). Residue D128 is part of the active site.

Belongs to the MoaC family. In terms of assembly, homohexamer; trimer of dimers.

It carries out the reaction (8S)-3',8-cyclo-7,8-dihydroguanosine 5'-triphosphate = cyclic pyranopterin phosphate + diphosphate. It participates in cofactor biosynthesis; molybdopterin biosynthesis. In terms of biological role, catalyzes the conversion of (8S)-3',8-cyclo-7,8-dihydroguanosine 5'-triphosphate to cyclic pyranopterin monophosphate (cPMP). In Paraburkholderia xenovorans (strain LB400), this protein is Cyclic pyranopterin monophosphate synthase.